The sequence spans 223 residues: Thiamine-phosphate synthase (223 aa).

4-amino-2-methyl-5-(diphosphooxymethyl)pyrimidine is bound by residues 47 to 51 (QLRDK) and N84. Positions 85 and 104 each coordinate Mg(2+). S123 provides a ligand contact to 4-amino-2-methyl-5-(diphosphooxymethyl)pyrimidine. Position 150-152 (150-152 (TPT)) interacts with 2-[(2R,5Z)-2-carboxy-4-methylthiazol-5(2H)-ylidene]ethyl phosphate. Residue K153 coordinates 4-amino-2-methyl-5-(diphosphooxymethyl)pyrimidine. G182 provides a ligand contact to 2-[(2R,5Z)-2-carboxy-4-methylthiazol-5(2H)-ylidene]ethyl phosphate.

Belongs to the thiamine-phosphate synthase family. Mg(2+) serves as cofactor.

The enzyme catalyses 2-[(2R,5Z)-2-carboxy-4-methylthiazol-5(2H)-ylidene]ethyl phosphate + 4-amino-2-methyl-5-(diphosphooxymethyl)pyrimidine + 2 H(+) = thiamine phosphate + CO2 + diphosphate. It carries out the reaction 2-(2-carboxy-4-methylthiazol-5-yl)ethyl phosphate + 4-amino-2-methyl-5-(diphosphooxymethyl)pyrimidine + 2 H(+) = thiamine phosphate + CO2 + diphosphate. The catalysed reaction is 4-methyl-5-(2-phosphooxyethyl)-thiazole + 4-amino-2-methyl-5-(diphosphooxymethyl)pyrimidine + H(+) = thiamine phosphate + diphosphate. The protein operates within cofactor biosynthesis; thiamine diphosphate biosynthesis; thiamine phosphate from 4-amino-2-methyl-5-diphosphomethylpyrimidine and 4-methyl-5-(2-phosphoethyl)-thiazole: step 1/1. Condenses 4-methyl-5-(beta-hydroxyethyl)thiazole monophosphate (THZ-P) and 2-methyl-4-amino-5-hydroxymethyl pyrimidine pyrophosphate (HMP-PP) to form thiamine monophosphate (TMP). This chain is Thiamine-phosphate synthase, found in Saccharopolyspora erythraea (strain ATCC 11635 / DSM 40517 / JCM 4748 / NBRC 13426 / NCIMB 8594 / NRRL 2338).